The primary structure comprises 95 residues: MTQKEKNETCIHVTVSGKVQGVFFRESVRKKAEELQLTGWVKNLSHGDVELVACGERDSIMILTEWLWEGPPQAAVSNVNWEEIVVEDYSDFRVR.

The region spanning 10 to 95 (CIHVTVSGKV…VEDYSDFRVR (86 aa)) is the Acylphosphatase-like domain. Residues arginine 25 and asparagine 43 contribute to the active site.

Belongs to the acylphosphatase family.

It carries out the reaction an acyl phosphate + H2O = a carboxylate + phosphate + H(+). The chain is Acylphosphatase (acyP) from Coxiella burnetii (strain RSA 493 / Nine Mile phase I).